Consider the following 161-residue polypeptide: Probable ubiquitin-conjugating enzyme E2 16 (161 aa).

A UBC core domain is found at 15–161 (IATNRLQKEL…TRWWFHDDKV (147 aa)). Catalysis depends on cysteine 99, which acts as the Glycyl thioester intermediate.

This sequence belongs to the ubiquitin-conjugating enzyme family.

It catalyses the reaction S-ubiquitinyl-[E1 ubiquitin-activating enzyme]-L-cysteine + [E2 ubiquitin-conjugating enzyme]-L-cysteine = [E1 ubiquitin-activating enzyme]-L-cysteine + S-ubiquitinyl-[E2 ubiquitin-conjugating enzyme]-L-cysteine.. The protein operates within protein modification; protein ubiquitination. Its function is as follows. Accepts the ubiquitin from the E1 complex and catalyzes its covalent attachment to other proteins. This is Probable ubiquitin-conjugating enzyme E2 16 (UBC16) from Arabidopsis thaliana (Mouse-ear cress).